The sequence spans 175 residues: NADH-ubiquinone oxidoreductase chain 6 (175 aa).

5 helical membrane-spanning segments follow: residues 1–21, 25–45, 47–67, 88–108, and 149–169; these read MTMYIAFILSTIFVIGFVGFS, SPIYGGLGLIVSGGVGCGIVL, FGGSFLGLMVFLIYLGGMLVV, TVFGAFVSGLMMEFCMVYYAL, and YGTWLVIVTGWSLLIGVVVIM.

The protein belongs to the complex I subunit 6 family. Core subunit of respiratory chain NADH dehydrogenase (Complex I) which is composed of 45 different subunits.

It localises to the mitochondrion inner membrane. It catalyses the reaction a ubiquinone + NADH + 5 H(+)(in) = a ubiquinol + NAD(+) + 4 H(+)(out). Its function is as follows. Core subunit of the mitochondrial membrane respiratory chain NADH dehydrogenase (Complex I) which catalyzes electron transfer from NADH through the respiratory chain, using ubiquinone as an electron acceptor. Essential for the catalytic activity and assembly of complex I. This is NADH-ubiquinone oxidoreductase chain 6 (MT-ND6) from Sus scrofa (Pig).